Consider the following 489-residue polypeptide: Monocarboxylate transporter 2 (489 aa).

The Cytoplasmic portion of the chain corresponds to 1-21; the sequence is MPSESSVKATAAPPPFPLPPD. The chain crosses the membrane as a helical span at residues 22–42; the sequence is GGWGWVVVCASFISIGFSYAF. Over 43–65 the chain is Extracellular; it reads PKAVTVFFNDIKDIFKTTSSQIA. The chain crosses the membrane as a helical span at residues 66–86; sequence WISSIMLAVMYAGGPISSVLV. The Cytoplasmic portion of the chain corresponds to 87–95; the sequence is NNYGSRPVV. Residues 96 to 116 traverse the membrane as a helical segment; sequence IVGGLLCCTGMILASFSSSVI. Over 117-121 the chain is Extracellular; that stretch reads ELYLT. The chain crosses the membrane as a helical span at residues 122-142; sequence VGFIGGLGLAFNLQPALTIIG. Residues 143-154 lie on the Cytoplasmic side of the membrane; the sequence is KYFYRKRPLANG. The chain crosses the membrane as a helical span at residues 155-175; the sequence is FAMAGSPVFLSTLAPFNQFLF. The Extracellular segment spans residues 176 to 179; the sequence is NSYG. The chain crosses the membrane as a helical span at residues 180-200; sequence WKGSFLILGAIFLHSCVAGCL. The Cytoplasmic segment spans residues 201–250; that stretch reads MRPVGPSPRAAKSKSKVGSRQDSSTKRLSKVSTAEKINRFLDFGLFTHRG. The tract at residues 206-227 is disordered; that stretch reads PSPRAAKSKSKVGSRQDSSTKR. Residues 251 to 271 traverse the membrane as a helical segment; the sequence is FLIYLSGNVVLFLGMFAPIIF. The Extracellular segment spans residues 272 to 286; it reads LAPYAKDKGVDDYNS. The chain crosses the membrane as a helical span at residues 287 to 307; sequence AFLLSVMAFTDMFARPSVGLI. At 308-316 the chain is on the cytoplasmic side; sequence ANTSLIRPR. A helical transmembrane segment spans residues 317-337; the sequence is IQYLFSVAIMFTGICHLLCPL. The Extracellular segment spans residues 338 to 342; the sequence is AHSYT. The helical transmembrane segment at 343-363 threads the bilayer; sequence ALVVYVIFFGIGFGSISSLLF. The Cytoplasmic segment spans residues 364 to 377; that stretch reads ECLMDQVGASRFSS. Residues 378 to 398 form a helical membrane-spanning segment; the sequence is AVGLVTIVECCPVLFGPPLAG. Over 399 to 410 the chain is Extracellular; sequence KLLDITGQYKYL. The chain crosses the membrane as a helical span at residues 411-431; sequence YIASGIVVLSSGIYLLICNAI. At 432–489 the chain is on the cytoplasmic side; the sequence is NYRLLEKERKREKARRKKSASQASKEMEALSRSKQDDVTVKVSNTHNPPSDRDKESSI. Residues 441-489 are disordered; the sequence is KREKARRKKSASQASKEMEALSRSKQDDVTVKVSNTHNPPSDRDKESSI. Composition is skewed to basic and acidic residues over residues 456-470 and 480-489; these read KEME…DDVT and PSDRDKESSI.

It belongs to the major facilitator superfamily. Monocarboxylate porter (TC 2.A.1.13) family. Homodimer. Interacts with GRID2IP. Interacts with EMB; interaction mediates SLC16A7 targeting to the plasma membrane. Interacts with isoform 2 of BSG. In terms of tissue distribution, detected in brain and kidney (at protein level).

It is found in the cell membrane. It localises to the basolateral cell membrane. The protein localises to the cytoplasm. It carries out the reaction 3-methyl-2-oxobutanoate(out) + H(+)(out) = 3-methyl-2-oxobutanoate(in) + H(+)(in). It catalyses the reaction (S)-lactate(in) + H(+)(in) = (S)-lactate(out) + H(+)(out). The enzyme catalyses acetoacetate(out) + H(+)(out) = acetoacetate(in) + H(+)(in). The catalysed reaction is (R)-3-hydroxybutanoate(out) + H(+)(out) = (R)-3-hydroxybutanoate(in) + H(+)(in). It carries out the reaction 4-methyl-2-oxopentanoate(out) + H(+)(out) = 4-methyl-2-oxopentanoate(in) + H(+)(in). It catalyses the reaction pyruvate(out) + H(+)(out) = pyruvate(in) + H(+)(in). The enzyme catalyses (S)-3-hydroxybutanoate(out) + H(+)(out) = (S)-3-hydroxybutanoate(in) + H(+)(in). Its activity is regulated as follows. Transport activity exhibits steep dependence on substrate concentration. Substrate concentration sensitivity of SLC16A7 arises from the strong inter-subunit cooperativity of the SLC16A7 dimer during transport. Inhibited by AR-C155858. Proton-coupled monocarboxylate symporter. Catalyzes the rapid transport across the plasma membrane of monocarboxylates such as L-lactate, pyruvate and ketone bodies, acetoacetate, beta-hydroxybutyrate and acetate. Dimerization is functionally required and both subunits work cooperatively in transporting substrate. The sequence is that of Monocarboxylate transporter 2 (Slc16a7) from Rattus norvegicus (Rat).